Here is a 143-residue protein sequence, read N- to C-terminus: Transcription antitermination protein NusB (143 aa).

The protein belongs to the NusB family.

Involved in transcription antitermination. Required for transcription of ribosomal RNA (rRNA) genes. Binds specifically to the boxA antiterminator sequence of the ribosomal RNA (rrn) operons. This chain is Transcription antitermination protein NusB, found in Clostridium botulinum (strain ATCC 19397 / Type A).